The chain runs to 155 residues: Ribosomal RNA large subunit methyltransferase H (155 aa).

S-adenosyl-L-methionine is bound by residues L72, G103, and 122 to 127; that span reads LGRMVW.

It belongs to the RNA methyltransferase RlmH family. Homodimer.

The protein resides in the cytoplasm. It carries out the reaction pseudouridine(1915) in 23S rRNA + S-adenosyl-L-methionine = N(3)-methylpseudouridine(1915) in 23S rRNA + S-adenosyl-L-homocysteine + H(+). Specifically methylates the pseudouridine at position 1915 (m3Psi1915) in 23S rRNA. The polypeptide is Ribosomal RNA large subunit methyltransferase H (Cereibacter sphaeroides (strain KD131 / KCTC 12085) (Rhodobacter sphaeroides)).